A 141-amino-acid chain; its full sequence is Lutropin subunit beta (141 aa).

The signal sequence occupies residues 1–20 (MEMLQGLLLLMLLSMGGTWA). 6 disulfides stabilise this stretch: Cys29-Cys77, Cys43-Cys92, Cys46-Cys130, Cys54-Cys108, Cys58-Cys110, and Cys113-Cys120. Asn33 and Asn50 each carry an N-linked (GlcNAc...) asparagine glycan.

Belongs to the glycoprotein hormones subunit beta family. In terms of assembly, heterodimer of a common alpha chain and a unique beta chain which confers biological specificity to thyrotropin, lutropin, follitropin and gonadotropin.

It localises to the secreted. Functionally, promotes spermatogenesis and ovulation by stimulating the testes and ovaries to synthesize steroids. The protein is Lutropin subunit beta (LHB) of Pongo pygmaeus (Bornean orangutan).